Here is a 300-residue protein sequence, read N- to C-terminus: Sulfate adenylyltransferase subunit 2 (300 aa).

A disordered region spans residues 281-300 (RAIDRDEAGSMEKKKREGYF).

Belongs to the PAPS reductase family. CysD subfamily. Heterodimer composed of CysD, the smaller subunit, and CysN.

The catalysed reaction is sulfate + ATP + H(+) = adenosine 5'-phosphosulfate + diphosphate. It participates in sulfur metabolism; hydrogen sulfide biosynthesis; sulfite from sulfate: step 1/3. In terms of biological role, with CysN forms the ATP sulfurylase (ATPS) that catalyzes the adenylation of sulfate producing adenosine 5'-phosphosulfate (APS) and diphosphate, the first enzymatic step in sulfur assimilation pathway. APS synthesis involves the formation of a high-energy phosphoric-sulfuric acid anhydride bond driven by GTP hydrolysis by CysN coupled to ATP hydrolysis by CysD. The polypeptide is Sulfate adenylyltransferase subunit 2 (Brucella abortus (strain 2308)).